The following is a 297-amino-acid chain: Giardin subunit alpha-6 (297 aa).

4 Annexin repeats span residues 3–72 (TTVQ…AYLW), 74–146 (KPGD…HWIL), 153–222 (FDID…AAHY), and 226–295 (HPAR…ILWR).

This sequence belongs to the annexin family. Giardin subunit alpha subfamily.

The protein localises to the cytoplasm. It is found in the cytoskeleton. In terms of biological role, giardins are involved in parasite attachment to the intestinal mucosa and in the cytoskeletal disassembly and reassembly that marks the transition from infectious trophozoite to transmissible cyst. They may interact with other cytoskeletal proteins such as microtubules in the microribbons or crossbridges, to maintain the integrity of the ventral disk. The sequence is that of Giardin subunit alpha-6 from Giardia intestinalis (Giardia lamblia).